A 527-amino-acid chain; its full sequence is Pentatricopeptide repeat-containing protein At4g25270, chloroplastic (527 aa).

The transit peptide at 1–47 (MVSIVVHKPSFSYPSVSSSSMKKKPRHHQQLKQHRQNQYNNNGFTSL) directs the protein to the chloroplast. The tract at residues 12–44 (SYPSVSSSSMKKKPRHHQQLKQHRQNQYNNNGF) is disordered. Over residues 21–35 (MKKKPRHHQQLKQHR) the composition is skewed to basic residues. PPR repeat units lie at residues 126–156 (NLGI…MSKR), 159–193 (SPFA…GVKP), 194–228 (DRFT…GFGY), 229–259 (DVYV…IPHK), 260–294 (DYVS…GIEP), 295–326 (DKVA…GMEW), 327–361 (ELSV…DTVS), 367–389 (SAHS…NAKP), 390–425 (DGIT…GIDP), and 426–457 (KMEH…MGLE). Residues 462 to 527 (VWGALLYACY…QMMVDRGLET (66 aa)) form a type E motif; degenerate region.

The protein belongs to the PPR family. PCMP-E subfamily.

It localises to the plastid. It is found in the chloroplast. This Arabidopsis thaliana (Mouse-ear cress) protein is Pentatricopeptide repeat-containing protein At4g25270, chloroplastic (PCMP-E53).